A 776-amino-acid polypeptide reads, in one-letter code: Photosystem I P700 chlorophyll a apoprotein A1 (776 aa).

8 helical membrane-spanning segments follow: residues 76 to 99 (IFSA…FHGA), 162 to 185 (LMAL…FHYH), 201 to 225 (LQHH…HVAN), 309 to 327 (VAHH…GHVY), 368 to 391 (WHAQ…HHMY), 407 to 433 (LGLF…IAVI), 455 to 477 (AIIS…LYIH), and 557 to 575 (LMIH…LILL). Cysteine 599 and cysteine 608 together coordinate [4Fe-4S] cluster. 2 helical membrane passes run 615 to 636 (HVFL…YFSW) and 690 to 712 (LSGY…MFLF). Divinylchlorophyll a' is bound at residue histidine 701. Divinyl chlorophyll a-binding residues include methionine 709 and tyrosine 717. Tryptophan 718 is a binding site for phylloquinone. Residues 750–770 (AVGVTHFLFGGIVTTWAFFHA) traverse the membrane as a helical segment.

The protein belongs to the PsaA/PsaB family. The PsaA/B heterodimer binds the P700 divinyl chlorophyll special pair and subsequent electron acceptors. PSI consists of a core antenna complex that captures photons, and an electron transfer chain that converts photonic excitation into a charge separation. The cyanobacterial PSI reaction center is composed of one copy each of PsaA,B,C,D,E,F,I,J,K,L,M and X, and forms trimeric complexes. The cofactor is PSI electron transfer chain: 5 divinyl chlorophyll a, 1 divinyl chlorophyll a', 2 phylloquinones and 3 4Fe-4S clusters. PSI core antenna: 90 divinyl chlorophyll a, 22 carotenoids, 3 phospholipids and 1 galactolipid. P700 is a divinyl chlorophyll a/divinyl chlorophyll a' dimer, A0 is one or more divinyl chlorophyll a, A1 is one or both phylloquinones and FX is a shared 4Fe-4S iron-sulfur center..

The protein resides in the cellular thylakoid membrane. It catalyses the reaction reduced [plastocyanin] + hnu + oxidized [2Fe-2S]-[ferredoxin] = oxidized [plastocyanin] + reduced [2Fe-2S]-[ferredoxin]. Functionally, psaA and PsaB bind P700, the primary electron donor of photosystem I (PSI), as well as the electron acceptors A0, A1 and FX. PSI is a plastocyanin/cytochrome c6-ferredoxin oxidoreductase, converting photonic excitation into a charge separation, which transfers an electron from the donor P700 chlorophyll pair to the spectroscopically characterized acceptors A0, A1, FX, FA and FB in turn. Oxidized P700 is reduced on the lumenal side of the thylakoid membrane by plastocyanin or cytochrome c6. The chain is Photosystem I P700 chlorophyll a apoprotein A1 from Prochlorococcus marinus (strain MIT 9303).